The primary structure comprises 474 residues: MTTPTPFPVGPAHIVGIGGIGMSGIADVMLTMGYEVQGSDVSDSANVERLRARGVKVFIGHKPENVVGAGTVIISTAIRRDNPEVQAARAAGIPVVRRANMLAEITRLKYTVCVAGTHGKTTTTSLVACLLDGAGIDPTVINGGIIHAYGSNYKAGESDWMVVESDESDGTFAKLHPTCAIVTNIDPEHMDHYGTMDKLREAFDTFVENLPFYGFAVLCTDHPEVQALAARVTDRRRITYGFNLQADVRAVNLSTDLKGAHFDVEIRRGAGEAPRRIEGLTLPMAGEHNVQNALAAITVALELGASDEQISASLASFGGVKRRFTPVGEWLPAAGGEPVKIIDDYGHHPVEIAAVLKAARAMQADRTVIAVCQPHRYSRLKDLFEDFSRCFDQADHVLVAPVYEAGETPIPGITHETLVRSIQRNGHRSARALPSLAELPEVVKTLAGPGAMVVCLGAGDITRYAGELEARLKG.

Position 116–122 (116–122 (GTHGKTT)) interacts with ATP.

This sequence belongs to the MurCDEF family.

It localises to the cytoplasm. It carries out the reaction UDP-N-acetyl-alpha-D-muramate + L-alanine + ATP = UDP-N-acetyl-alpha-D-muramoyl-L-alanine + ADP + phosphate + H(+). It functions in the pathway cell wall biogenesis; peptidoglycan biosynthesis. Functionally, cell wall formation. The polypeptide is UDP-N-acetylmuramate--L-alanine ligase (Hyphomonas neptunium (strain ATCC 15444)).